Here is a 397-residue protein sequence, read N- to C-terminus: 1-deoxy-D-xylulose 5-phosphate reductoisomerase (397 aa).

Residues Thr-17, Gly-18, Ser-19, Ile-20, Ala-45, Asn-47, and Asn-130 each contribute to the NADPH site. Lys-131 lines the 1-deoxy-D-xylulose 5-phosphate pocket. Glu-132 lines the NADPH pocket. Asp-156 contributes to the Mn(2+) binding site. 4 residues coordinate 1-deoxy-D-xylulose 5-phosphate: Ser-157, Glu-158, Ser-182, and His-205. Residue Glu-158 coordinates Mn(2+). Residue Gly-211 coordinates NADPH. 1-deoxy-D-xylulose 5-phosphate contacts are provided by Ser-218, Asn-223, Lys-224, and Glu-227. Glu-227 contacts Mn(2+).

It belongs to the DXR family. Mg(2+) is required as a cofactor. Mn(2+) serves as cofactor.

The enzyme catalyses 2-C-methyl-D-erythritol 4-phosphate + NADP(+) = 1-deoxy-D-xylulose 5-phosphate + NADPH + H(+). Its pathway is isoprenoid biosynthesis; isopentenyl diphosphate biosynthesis via DXP pathway; isopentenyl diphosphate from 1-deoxy-D-xylulose 5-phosphate: step 1/6. Its function is as follows. Catalyzes the NADPH-dependent rearrangement and reduction of 1-deoxy-D-xylulose-5-phosphate (DXP) to 2-C-methyl-D-erythritol 4-phosphate (MEP). This Agrobacterium fabrum (strain C58 / ATCC 33970) (Agrobacterium tumefaciens (strain C58)) protein is 1-deoxy-D-xylulose 5-phosphate reductoisomerase.